A 130-amino-acid polypeptide reads, in one-letter code: Small ribosomal subunit protein uS9 (130 aa).

The segment at 99–130 (KSAGMLTRDPRMKERKKPGLKKARKASQFSKR) is disordered. A compositionally biased stretch (basic residues) spans 111 to 130 (KERKKPGLKKARKASQFSKR).

It belongs to the universal ribosomal protein uS9 family.

The protein is Small ribosomal subunit protein uS9 of Latilactobacillus sakei subsp. sakei (strain 23K) (Lactobacillus sakei subsp. sakei).